The following is a 295-amino-acid chain: uncharacterized protein (295 aa).

It localises to the plastid. Its subcellular location is the chloroplast. This is an uncharacterized protein from Euglena gracilis.